The following is a 556-amino-acid chain: GDP-Man:Man(3)GlcNAc(2)-PP-Dol alpha-1,2-mannosyltransferase (556 aa).

The Lumenal segment spans residues 1-7; that stretch reads MANGLFT. Residues 8-28 traverse the membrane as a helical segment; the sequence is YVAISLFTIGPLLALFIPFVW. The Cytoplasmic segment spans residues 29–184; sequence RLVGSSLGWY…RWVLASTWPY (156 aa). Residues 64-79 show a composition bias toward basic and acidic residues; the sequence is SKSAKGRKAEKEDRDT. A disordered region spans residues 64 to 86; the sequence is SKSAKGRKAEKEDRDTFNNTEAT. Residues 185-205 constitute an intramembrane region (helical); the sequence is FTLAGQSFGSLIMAWDAFSLL. Topologically, residues 206-454 are cytoplasmic; that stretch reads VPDIFVDTMG…VGVNGMWNEH (249 aa). Residues 455–475 constitute an intramembrane region (helical); that stretch reads FGIGVVEYQAAGLISVVHDSG. Topologically, residues 476–556 are cytoplasmic; it reads GPKLDIVVEV…KAVEKPKSRQ (81 aa).

The protein belongs to the glycosyltransferase group 1 family. Glycosyltransferase 4 subfamily.

It localises to the endoplasmic reticulum membrane. It carries out the reaction an alpha-D-Man-(1-&gt;3)-[alpha-D-Man-(1-&gt;6)]-beta-D-Man-(1-&gt;4)-beta-D-GlcNAc-(1-&gt;4)-alpha-D-GlcNAc-diphospho-di-trans,poly-cis-dolichol + 2 GDP-alpha-D-mannose = an alpha-D-Man-(1-&gt;2)-alpha-D-Man-(1-&gt;2)-alpha-D-Man-(1-&gt;3)-[alpha-D-Man-(1-&gt;6)]-beta-D-Man-(1-&gt;4)-beta-D-GlcNAc-(1-&gt;4)-alpha-D-GlcNAc-diphospho-di-trans,poly-cis-dolichol + 2 GDP + 2 H(+). It functions in the pathway protein modification; protein glycosylation. Its function is as follows. GDP-Man:Man(3)GlcNAc(2)-PP-Dol alpha-1,2-mannosyltransferase that operates in the biosynthetic pathway of dolichol-linked oligosaccharides, the glycan precursors employed in protein asparagine (N)-glycosylation. The assembly of dolichol-linked oligosaccharides begins on the cytosolic side of the endoplasmic reticulum membrane and finishes in its lumen. The sequential addition of sugars to dolichol pyrophosphate produces dolichol-linked oligosaccharides containing fourteen sugars, including two GlcNAcs, nine mannoses and three glucoses. Once assembled, the oligosaccharide is transferred from the lipid to nascent proteins by oligosaccharyltransferases. Catalyzes, on the cytoplasmic face of the endoplasmic reticulum, the addition of the fourth and fifth mannose residues to the dolichol-linked oligosaccharide chain, to produce Man(5)GlcNAc(2)-PP-dolichol core oligosaccharide. This is GDP-Man:Man(3)GlcNAc(2)-PP-Dol alpha-1,2-mannosyltransferase (alg-11) from Neurospora crassa (strain ATCC 24698 / 74-OR23-1A / CBS 708.71 / DSM 1257 / FGSC 987).